Consider the following 390-residue polypeptide: Leucine aminopeptidase 1 (390 aa).

An N-terminal signal peptide occupies residues 1–18; the sequence is MKLSTALVLGATATGAWS. Residues 19 to 90 constitute a propeptide that is removed on maturation; the sequence is YAIPQLEQEV…FPTLDAGSYV (72 aa). N120 is a glycosylation site (N-linked (GlcNAc...) asparagine). The Zn(2+) site is built by H190, D209, E248, and D275. C324 and C328 are joined by a disulfide. H357 is a Zn(2+) binding site.

The protein belongs to the peptidase M28 family. M28E subfamily. In terms of assembly, monomer. It depends on Zn(2+) as a cofactor.

The protein localises to the secreted. Functionally, extracellular aminopeptidase that allows assimilation of proteinaceous substrates. The polypeptide is Leucine aminopeptidase 1 (lap1) (Emericella nidulans (strain FGSC A4 / ATCC 38163 / CBS 112.46 / NRRL 194 / M139) (Aspergillus nidulans)).